An 89-amino-acid polypeptide reads, in one-letter code: Small ribosomal subunit protein uS15 (89 aa).

Belongs to the universal ribosomal protein uS15 family. Part of the 30S ribosomal subunit. Forms a bridge to the 50S subunit in the 70S ribosome, contacting the 23S rRNA.

In terms of biological role, one of the primary rRNA binding proteins, it binds directly to 16S rRNA where it helps nucleate assembly of the platform of the 30S subunit by binding and bridging several RNA helices of the 16S rRNA. Its function is as follows. Forms an intersubunit bridge (bridge B4) with the 23S rRNA of the 50S subunit in the ribosome. In Thiobacillus denitrificans (strain ATCC 25259 / T1), this protein is Small ribosomal subunit protein uS15.